The primary structure comprises 264 residues: Pimeloyl-[acyl-carrier protein] methyl ester esterase (264 aa).

The AB hydrolase-1 domain maps to 23-244 (LVMLHGWGVN…MLAKASHAPF (222 aa)). Residues Trp29, 87–88 (SL), and 150–154 (FLAIQ) each bind substrate. The active-site Nucleophile is Ser87. Catalysis depends on residues Asp214 and His241. His241 provides a ligand contact to substrate.

The protein belongs to the AB hydrolase superfamily. Carboxylesterase BioH family. As to quaternary structure, monomer.

The protein localises to the cytoplasm. The catalysed reaction is 6-carboxyhexanoyl-[ACP] methyl ester + H2O = 6-carboxyhexanoyl-[ACP] + methanol + H(+). The protein operates within cofactor biosynthesis; biotin biosynthesis. The physiological role of BioH is to remove the methyl group introduced by BioC when the pimeloyl moiety is complete. It allows to synthesize pimeloyl-ACP via the fatty acid synthetic pathway through the hydrolysis of the ester bonds of pimeloyl-ACP esters. In Shewanella sp. (strain MR-7), this protein is Pimeloyl-[acyl-carrier protein] methyl ester esterase.